Here is a 583-residue protein sequence, read N- to C-terminus: Cell division protein FtsZ (583 aa).

GTP is bound by residues 24 to 28 (GGGGN), 111 to 113 (GTG), Glu-142, Arg-146, and Asp-190. Disordered stretches follow at residues 391-425 (HQQP…VQQA) and 510-583 (TNSL…RQSN). The segment covering 412-425 (APAALRPAQPVQQA) has biased composition (low complexity).

This sequence belongs to the FtsZ family. In terms of assembly, homodimer. Polymerizes to form a dynamic ring structure in a strictly GTP-dependent manner. Interacts directly with several other division proteins.

The protein resides in the cytoplasm. Functionally, essential cell division protein that forms a contractile ring structure (Z ring) at the future cell division site. The regulation of the ring assembly controls the timing and the location of cell division. One of the functions of the FtsZ ring is to recruit other cell division proteins to the septum to produce a new cell wall between the dividing cells. Binds GTP and shows GTPase activity. This is Cell division protein FtsZ from Rhizobium radiobacter (Agrobacterium tumefaciens).